Here is a 713-residue protein sequence, read N- to C-terminus: Serologically defined colon cancer antigen 8 (713 aa).

Residues serine 4 and serine 28 each carry the phosphoserine modification. Residues 84-103 (QADKESEVSPSRRRKMSPLR) form a disordered region. Residues 129-175 (IHHLEAEVKFCKEELSGMKNKIQVVVLENEGLQQQLKSQRQEETLRE) adopt a coiled-coil conformation. The tract at residues 194–215 (EDSGVGETSKRPFSHDNADFGK) is disordered. A compositionally biased stretch (basic and acidic residues) spans 201–212 (TSKRPFSHDNAD). The tract at residues 216–713 (AASAGEQLEL…QLPSMPQSDC (498 aa)) is sufficient for homodimerization. 2 coiled-coil regions span residues 223–273 (LELE…LLAA) and 348–707 (EEAN…QLPS). The interval 533–713 (HQLHLTRQEK…QLPSMPQSDC (181 aa)) is mediates interaction with OFD1.

Homodimer. Interacts with OFD1; the interaction is direct. Interacts with FAM161A. Interacts with RABEP2, ERC1 and CEP131. As to expression, expressed in thymus, prostate, testis, ovary, small intestine, colon, mucosa, colon and renal cancer tumors.

It localises to the cytoplasm. It is found in the cytoskeleton. The protein localises to the microtubule organizing center. Its subcellular location is the centrosome. The protein resides in the centriole. It localises to the cilium basal body. It is found in the cell junction. Functionally, plays a role in the establishment of cell polarity and epithelial lumen formation. Also plays an essential role in ciliogenesis and subsequent Hedgehog signaling pathway that requires the presence of intact primary cilia for pathway activation. Mechanistically, interacts with and mediates RABEP2 centrosomal localization which is critical for ciliogenesis. The protein is Serologically defined colon cancer antigen 8 (SDCCAG8) of Homo sapiens (Human).